We begin with the raw amino-acid sequence, 303 residues long: Bifunctional protein FolD (303 aa).

NADP(+) contacts are provided by residues 175-177 (GVS) and Ile-243.

This sequence belongs to the tetrahydrofolate dehydrogenase/cyclohydrolase family. In terms of assembly, homodimer.

The catalysed reaction is (6R)-5,10-methylene-5,6,7,8-tetrahydrofolate + NADP(+) = (6R)-5,10-methenyltetrahydrofolate + NADPH. It catalyses the reaction (6R)-5,10-methenyltetrahydrofolate + H2O = (6R)-10-formyltetrahydrofolate + H(+). The protein operates within one-carbon metabolism; tetrahydrofolate interconversion. In terms of biological role, catalyzes the oxidation of 5,10-methylenetetrahydrofolate to 5,10-methenyltetrahydrofolate and then the hydrolysis of 5,10-methenyltetrahydrofolate to 10-formyltetrahydrofolate. The chain is Bifunctional protein FolD from Xanthomonas axonopodis pv. citri (strain 306).